Consider the following 135-residue polypeptide: Fatty acid-binding protein 5 (135 aa).

Ala2 is subject to N-acetylalanine. Ser3 is modified (phosphoserine). Residues 24–34 (KELGVGLALRK) carry the Nuclear localization signal motif. 1-eicosanoylglycerol contacts are provided by Cys43, Thr56, and Arg109. Cysteines 120 and 127 form a disulfide. 1-eicosanoylglycerol is bound at residue 129–131 (RVY). 129 to 131 (RVY) lines the (9Z,12Z)-octadecadienoate pocket. Tyr131 contributes to the hexadecanoate binding site. Tyr131 is an N-eicosanoyl ethanolamine binding site. The residue at position 131 (Tyr131) is a Phosphotyrosine.

It belongs to the calycin superfamily. Fatty-acid binding protein (FABP) family. In terms of assembly, monomer. In terms of tissue distribution, widely expressed.

It is found in the cytoplasm. The protein resides in the nucleus. It localises to the synapse. Its subcellular location is the postsynaptic density. The protein localises to the secreted. The enzyme catalyses hexadecanoate(out) = hexadecanoate(in). It carries out the reaction (9Z,12Z)-octadecadienoate(out) = (9Z,12Z)-octadecadienoate(in). It catalyses the reaction (9Z)-octadecenoate(out) = (9Z)-octadecenoate(in). Functionally, intracellular carrier for long-chain fatty acids and related active lipids, such as endocannabinoids, that regulate the metabolism and actions of the ligands they bind. In addition to the cytosolic transport, selectively delivers specific fatty acids from the cytosol to the nucleus, wherein they activate nuclear receptors. Delivers retinoic acid to the nuclear receptor peroxisome proliferator-activated receptor delta; which promotes proliferation and survival. May also serve as a synaptic carrier of endocannabinoid at central synapses and thus controls retrograde endocannabinoid signaling. Modulates inflammation by regulating PTGES induction via NF-kappa-B activation, and prostaglandin E2 (PGE2) biosynthesis during inflammation. May be involved in keratinocyte differentiation. The sequence is that of Fatty acid-binding protein 5 from Mus musculus (Mouse).